The following is a 277-amino-acid chain: Pantothenate synthetase (277 aa).

An ATP-binding site is contributed by 26–33 (MGNLHEGH). His-33 acts as the Proton donor in catalysis. Gln-57 serves as a coordination point for (R)-pantoate. Residue Gln-57 participates in beta-alanine binding. 144-147 (GKKD) is an ATP binding site. Residue Gln-150 coordinates (R)-pantoate. Residues Val-173 and 181–184 (LSSR) each bind ATP.

The protein belongs to the pantothenate synthetase family. In terms of assembly, homodimer.

Its subcellular location is the cytoplasm. The enzyme catalyses (R)-pantoate + beta-alanine + ATP = (R)-pantothenate + AMP + diphosphate + H(+). It functions in the pathway cofactor biosynthesis; (R)-pantothenate biosynthesis; (R)-pantothenate from (R)-pantoate and beta-alanine: step 1/1. Its function is as follows. Catalyzes the condensation of pantoate with beta-alanine in an ATP-dependent reaction via a pantoyl-adenylate intermediate. The sequence is that of Pantothenate synthetase from Paraburkholderia phymatum (strain DSM 17167 / CIP 108236 / LMG 21445 / STM815) (Burkholderia phymatum).